Here is a 339-residue protein sequence, read N- to C-terminus: Ketol-acid reductoisomerase (NADP(+)) (339 aa).

The KARI N-terminal Rossmann domain maps to 1-182; that stretch reads MRVYYDRDAD…GGGRSGVIET (182 aa). Residues 24-27, Arg-48, Ser-51, Thr-53, and 83-86 contribute to the NADP(+) site; these read YGSQ and DELQ. His-108 is an active-site residue. An NADP(+)-binding site is contributed by Gly-134. A KARI C-terminal knotted domain is found at 183 to 328; sequence TFKEECETDL…GKLRAMMPWI (146 aa). Positions 191, 195, 227, and 231 each coordinate Mg(2+). Residue Ser-252 participates in substrate binding.

It belongs to the ketol-acid reductoisomerase family. It depends on Mg(2+) as a cofactor.

It catalyses the reaction (2R)-2,3-dihydroxy-3-methylbutanoate + NADP(+) = (2S)-2-acetolactate + NADPH + H(+). The enzyme catalyses (2R,3R)-2,3-dihydroxy-3-methylpentanoate + NADP(+) = (S)-2-ethyl-2-hydroxy-3-oxobutanoate + NADPH + H(+). Its pathway is amino-acid biosynthesis; L-isoleucine biosynthesis; L-isoleucine from 2-oxobutanoate: step 2/4. The protein operates within amino-acid biosynthesis; L-valine biosynthesis; L-valine from pyruvate: step 2/4. Involved in the biosynthesis of branched-chain amino acids (BCAA). Catalyzes an alkyl-migration followed by a ketol-acid reduction of (S)-2-acetolactate (S2AL) to yield (R)-2,3-dihydroxy-isovalerate. In the isomerase reaction, S2AL is rearranged via a Mg-dependent methyl migration to produce 3-hydroxy-3-methyl-2-ketobutyrate (HMKB). In the reductase reaction, this 2-ketoacid undergoes a metal-dependent reduction by NADPH to yield (R)-2,3-dihydroxy-isovalerate. This chain is Ketol-acid reductoisomerase (NADP(+)), found in Brucella canis (strain ATCC 23365 / NCTC 10854 / RM-666).